A 137-amino-acid polypeptide reads, in one-letter code: Holo-[acyl-carrier-protein] synthase (137 aa).

2 residues coordinate Mg(2+): Asp8 and Glu58.

This sequence belongs to the P-Pant transferase superfamily. AcpS family. It depends on Mg(2+) as a cofactor.

It localises to the cytoplasm. It catalyses the reaction apo-[ACP] + CoA = holo-[ACP] + adenosine 3',5'-bisphosphate + H(+). Transfers the 4'-phosphopantetheine moiety from coenzyme A to a Ser of acyl-carrier-protein. In Lactobacillus delbrueckii subsp. bulgaricus (strain ATCC BAA-365 / Lb-18), this protein is Holo-[acyl-carrier-protein] synthase.